A 281-amino-acid polypeptide reads, in one-letter code: 2-dehydro-3-deoxyphosphooctonate aldolase (281 aa).

The protein belongs to the KdsA family.

It localises to the cytoplasm. It carries out the reaction D-arabinose 5-phosphate + phosphoenolpyruvate + H2O = 3-deoxy-alpha-D-manno-2-octulosonate-8-phosphate + phosphate. The protein operates within carbohydrate biosynthesis; 3-deoxy-D-manno-octulosonate biosynthesis; 3-deoxy-D-manno-octulosonate from D-ribulose 5-phosphate: step 2/3. It participates in bacterial outer membrane biogenesis; lipopolysaccharide biosynthesis. The protein is 2-dehydro-3-deoxyphosphooctonate aldolase of Pseudomonas entomophila (strain L48).